Here is a 444-residue protein sequence, read N- to C-terminus: Divalent metal cation transporter MntH (444 aa).

Transmembrane regions (helical) follow at residues 39 to 59, 69 to 89, 109 to 128, 146 to 166, 175 to 195, 215 to 235, 264 to 284, 304 to 324, 346 to 366, 372 to 392, and 417 to 437; these read LLFAGPAVIASIAYVDPGNFA, GYTLLWVVAAANLIAMLFQAL, FSRPLVIALWIISEIAAMAT, LPLIIGMVATAMITFALLLFE, LVIGALVATIGLCYLAEMFIA, TALTIATGIVGATVMPHAVYL, VILALALAGMVNMAMVIMAAS, TPLLGAAAAAIFLISLITSGI, IPVWLRRLVTMVPAFIVILAG, ALVISQVILSIALPAPMIALI, and AAAIVLGLNMVLLIQAFGFTI.

It belongs to the NRAMP family.

The protein resides in the cell inner membrane. In terms of biological role, h(+)-stimulated, divalent metal cation uptake system. This is Divalent metal cation transporter MntH from Granulibacter bethesdensis (strain ATCC BAA-1260 / CGDNIH1).